We begin with the raw amino-acid sequence, 102 residues long: Putative pterin-4-alpha-carbinolamine dehydratase (102 aa).

This sequence belongs to the pterin-4-alpha-carbinolamine dehydratase family.

The catalysed reaction is (4aS,6R)-4a-hydroxy-L-erythro-5,6,7,8-tetrahydrobiopterin = (6R)-L-erythro-6,7-dihydrobiopterin + H2O. This Burkholderia orbicola (strain MC0-3) protein is Putative pterin-4-alpha-carbinolamine dehydratase.